The sequence spans 234 residues: uncharacterized protein (234 aa).

4 LRR repeats span residues 44–63, 64–84, 85–107, and 111–134; these read LEFL…LPKL, KLRK…EKCP, NLTH…PLKQ, and LKSL…VFKL. The disordered stretch occupies residues 161-234; the sequence is EGLDDEEEGE…GEEERGQKRK (74 aa). Residues 163–226 show a composition bias toward acidic residues; the sequence is LDDEEEGEHE…GEEDEEELGE (64 aa).

It belongs to the ANP32 family. Expressed in activated stem cells, such as mobilized CD34+ cells and cord blood CD34+ cells, but not in resting bone marrow CD34+ cells. Expressed in a variety of neoplastic cell lines, mainly in prostatic adenocarcinoma cell lines. Not expressed in normal prostatic tissue.

This is an uncharacterized protein from Homo sapiens (Human).